The following is a 337-amino-acid chain: Thiazole synthase (337 aa).

The segment at Met-1–Ala-41 is disordered. Over residues Gly-10–Gly-25 the composition is skewed to low complexity. Residues Leu-26–Ala-41 are compositionally biased toward gly residues. Residue Lys-144 is the Schiff-base intermediate with DXP of the active site. 1-deoxy-D-xylulose 5-phosphate contacts are provided by residues Gly-205, Ala-231–Gly-232, and Asn-253–Thr-254. Residues Phe-302–Arg-337 are disordered. Residues Val-319–Arg-337 show a composition bias toward low complexity.

It belongs to the ThiG family. As to quaternary structure, homotetramer. Forms heterodimers with either ThiH or ThiS.

It localises to the cytoplasm. The enzyme catalyses [ThiS sulfur-carrier protein]-C-terminal-Gly-aminoethanethioate + 2-iminoacetate + 1-deoxy-D-xylulose 5-phosphate = [ThiS sulfur-carrier protein]-C-terminal Gly-Gly + 2-[(2R,5Z)-2-carboxy-4-methylthiazol-5(2H)-ylidene]ethyl phosphate + 2 H2O + H(+). It functions in the pathway cofactor biosynthesis; thiamine diphosphate biosynthesis. Its function is as follows. Catalyzes the rearrangement of 1-deoxy-D-xylulose 5-phosphate (DXP) to produce the thiazole phosphate moiety of thiamine. Sulfur is provided by the thiocarboxylate moiety of the carrier protein ThiS. In vitro, sulfur can be provided by H(2)S. The sequence is that of Thiazole synthase from Frankia casuarinae (strain DSM 45818 / CECT 9043 / HFP020203 / CcI3).